Consider the following 122-residue polypeptide: Large ribosomal subunit protein uL14c (122 aa).

Belongs to the universal ribosomal protein uL14 family. As to quaternary structure, part of the 50S ribosomal subunit.

The protein localises to the plastid. It is found in the chloroplast. Functionally, binds to 23S rRNA. The chain is Large ribosomal subunit protein uL14c from Buxus microphylla (Littleleaf boxwood).